The following is an 807-amino-acid chain: PGC-1 and ERR-induced regulator in muscle protein 1 (807 aa).

Disordered regions lie at residues 29 to 80 (QADL…EDVA), 121 to 391 (CPGQ…TPAS), and 517 to 548 (PSHE…AGSR). 2 stretches are compositionally biased toward low complexity: residues 40–52 (SSDI…SGSS) and 145–160 (PAPS…PESP). Over residues 162–171 (HSDNPQSSPD) the composition is skewed to polar residues. Residues 180-194 (PGRKKRRAVGAKGTK) show a composition bias toward basic residues. Composition is skewed to polar residues over residues 195–211 (HSGS…SPQL), 311–346 (KPQS…STPA), and 363–391 (ALST…TPAS). A Phosphoserine modification is found at S198. Position 534 is a phosphothreonine (T534). R548 carries the post-translational modification Omega-N-methylarginine.

Highly expressed in skeletal muscles and heart with lower levels in brown adipose tissue (at protein level). Muscle-specific expression is increased by endurance exercise.

The protein localises to the cytoplasm. Its subcellular location is the nucleus. Functionally, regulates the expression of selective PPARGC1A/B and ESRRA/B/G target genes with roles in glucose and lipid metabolism, energy transfer, contractile function, muscle mitochondrial biogenesis and oxidative capacity. Required for the efficient induction of MT-CO2, MT-CO3, COX4I1, TFB1M, TFB2M, POLRMT and SIRT3 by PPARGC1A. Positively regulates the PPARGC1A/ESRRG-induced expression of CKMT2, TNNI3 and SLC2A4 and negatively regulates the PPARGC1A/ESRRG-induced expression of PDK4. The polypeptide is PGC-1 and ERR-induced regulator in muscle protein 1 (Perm1) (Mus musculus (Mouse)).